Reading from the N-terminus, the 382-residue chain is Carbamoyl phosphate synthase small chain (382 aa).

Positions 1–189 are CPSase; the sequence is MIKSALLVLE…GLPEAKKEDE (189 aa). 3 residues coordinate L-glutamine: serine 47, glycine 241, and glycine 243. The 188-residue stretch at 193 to 380 folds into the Glutamine amidotransferase type-1 domain; the sequence is HVVAYDFGAK…IALIEQYRKT (188 aa). Cysteine 269 serves as the catalytic Nucleophile. L-glutamine contacts are provided by leucine 270, glutamine 273, asparagine 311, glycine 313, and phenylalanine 314. Catalysis depends on residues histidine 353 and glutamate 355.

Belongs to the CarA family. In terms of assembly, composed of two chains; the small (or glutamine) chain promotes the hydrolysis of glutamine to ammonia, which is used by the large (or ammonia) chain to synthesize carbamoyl phosphate. Tetramer of heterodimers (alpha,beta)4.

The catalysed reaction is hydrogencarbonate + L-glutamine + 2 ATP + H2O = carbamoyl phosphate + L-glutamate + 2 ADP + phosphate + 2 H(+). The enzyme catalyses L-glutamine + H2O = L-glutamate + NH4(+). It participates in amino-acid biosynthesis; L-arginine biosynthesis; carbamoyl phosphate from bicarbonate: step 1/1. Its pathway is pyrimidine metabolism; UMP biosynthesis via de novo pathway; (S)-dihydroorotate from bicarbonate: step 1/3. Its function is as follows. Small subunit of the glutamine-dependent carbamoyl phosphate synthetase (CPSase). CPSase catalyzes the formation of carbamoyl phosphate from the ammonia moiety of glutamine, carbonate, and phosphate donated by ATP, constituting the first step of 2 biosynthetic pathways, one leading to arginine and/or urea and the other to pyrimidine nucleotides. The small subunit (glutamine amidotransferase) binds and cleaves glutamine to supply the large subunit with the substrate ammonia. This chain is Carbamoyl phosphate synthase small chain, found in Escherichia coli O6:H1 (strain CFT073 / ATCC 700928 / UPEC).